The following is a 306-amino-acid chain: Nucleotide-binding protein MUL_1815 (306 aa).

29 to 36 provides a ligand contact to ATP; it reads GLSGAGRG. A GTP-binding site is contributed by 80–83; sequence DVRS.

The protein belongs to the RapZ-like family.

Displays ATPase and GTPase activities. This chain is Nucleotide-binding protein MUL_1815, found in Mycobacterium ulcerans (strain Agy99).